Here is a 186-residue protein sequence, read N- to C-terminus: ADP-ribosylation factor-like protein 8 (186 aa).

An intramembrane region (note=Mediates targeting to membranes) is located at residues M1 to E19. GTP contacts are provided by residues Q29–T35, D71–Q75, and N130–D133.

The protein belongs to the small GTPase superfamily. Arf family. As to quaternary structure, interacts with tubulin. Interacts (in GTP-bound form) with Rilpl. Interacts with unc-104. As to expression, expressed throughout development, from embryo to adult stage, in different tissues such as larval motor neurons, salivary glands, testis and ovaries (at protein level).

It localises to the lysosome membrane. It is found in the synapse. The protein localises to the cell projection. Its subcellular location is the axon. The protein resides in the perikaryon. Functionally, required for normal functioning of the late endocytic pathway including lysosome motility and late endosome-lysosome fusion. Not required for the delivery of lysosomal membrane protein-containing vesicles to late endosomes. In larval motor neurons, mediates the anterograde axonal long-range transport of presynaptic lysosome-related vesicles required for presynaptic biogenesis and synaptic function. Acts downstream of Rab2 during presynaptic precursor vesicle biogenesis. Essential role in chromosome segregation. The sequence is that of ADP-ribosylation factor-like protein 8 from Drosophila melanogaster (Fruit fly).